We begin with the raw amino-acid sequence, 227 residues long: Cytosolic-abundant heat soluble protein 106094 (227 aa).

A disordered region spans residues 1 to 28 (MEAMNMNIPRDAMFVPPPESEQNGYHEK). Residues 90–140 (VEEARRDYAAKTRENEMLGQQYEKELERKSEAYRKHQEVEADKIRKELEKQ) are a coiled coil. CAHS motif stretches follow at residues 122-140 (YRKH…LEKQ) and 159-177 (QKRM…MDRE). Positions 198 to 227 (LDSSAAGTESGGHVVSQSEKFTERNREMKR) are disordered. Positions 217-227 (KFTERNREMKR) are enriched in basic and acidic residues.

Belongs to the Cytosolic-abundant heat soluble protein (CAHS) family.

The protein resides in the cytoplasm. CAHS proteins are cytosolic heat soluble proteins that seem to contribute to the anhydrobiosis in tardigrades, but their specific mechanisms are yet to be identified. It is possible that protection during anhydrobiosis might occur via the stabilization of vitrifying small molecules such as sugars, but not via the direct glass transition of CAHS proteins themselves. This is Cytosolic-abundant heat soluble protein 106094 from Paramacrobiotus richtersi (Water bear).